The sequence spans 205 residues: Guanylate kinase (205 aa).

The Guanylate kinase-like domain maps to Ser17 to Phe195. An ATP-binding site is contributed by Gly24–Asp31.

Belongs to the guanylate kinase family.

It localises to the cytoplasm. The enzyme catalyses GMP + ATP = GDP + ADP. Its function is as follows. Essential for recycling GMP and indirectly, cGMP. This chain is Guanylate kinase, found in Gloeobacter violaceus (strain ATCC 29082 / PCC 7421).